The sequence spans 411 residues: LL-diaminopimelate aminotransferase (411 aa).

The substrate site is built by Tyr-15 and Gly-42. Pyridoxal 5'-phosphate contacts are provided by residues Tyr-72, Ser-108 to Lys-109, Tyr-132, Asn-187, Tyr-218, and Ser-246 to Ser-248. Substrate-binding residues include Lys-109, Tyr-132, and Asn-187. The residue at position 249 (Lys-249) is an N6-(pyridoxal phosphate)lysine. The pyridoxal 5'-phosphate site is built by Arg-257 and Asn-292. Residues Asn-292 and Arg-388 each contribute to the substrate site.

The protein belongs to the class-I pyridoxal-phosphate-dependent aminotransferase family. LL-diaminopimelate aminotransferase subfamily. Homodimer. Requires pyridoxal 5'-phosphate as cofactor.

It catalyses the reaction (2S,6S)-2,6-diaminopimelate + 2-oxoglutarate = (S)-2,3,4,5-tetrahydrodipicolinate + L-glutamate + H2O + H(+). It functions in the pathway amino-acid biosynthesis; L-lysine biosynthesis via DAP pathway; LL-2,6-diaminopimelate from (S)-tetrahydrodipicolinate (aminotransferase route): step 1/1. In terms of biological role, involved in the synthesis of meso-diaminopimelate (m-DAP or DL-DAP), required for both lysine and peptidoglycan biosynthesis. Catalyzes the direct conversion of tetrahydrodipicolinate to LL-diaminopimelate. In Cyanothece sp. (strain PCC 7425 / ATCC 29141), this protein is LL-diaminopimelate aminotransferase.